Here is a 283-residue protein sequence, read N- to C-terminus: ATP phosphoribosyltransferase (283 aa).

Belongs to the ATP phosphoribosyltransferase family. Long subfamily. It depends on Mg(2+) as a cofactor.

The protein resides in the cytoplasm. The catalysed reaction is 1-(5-phospho-beta-D-ribosyl)-ATP + diphosphate = 5-phospho-alpha-D-ribose 1-diphosphate + ATP. Its pathway is amino-acid biosynthesis; L-histidine biosynthesis; L-histidine from 5-phospho-alpha-D-ribose 1-diphosphate: step 1/9. Feedback inhibited by histidine. In terms of biological role, catalyzes the condensation of ATP and 5-phosphoribose 1-diphosphate to form N'-(5'-phosphoribosyl)-ATP (PR-ATP). Has a crucial role in the pathway because the rate of histidine biosynthesis seems to be controlled primarily by regulation of HisG enzymatic activity. This chain is ATP phosphoribosyltransferase, found in Bifidobacterium longum (strain NCC 2705).